A 190-amino-acid chain; its full sequence is Elongation factor P-like protein (190 aa).

The protein belongs to the elongation factor P family.

The polypeptide is Elongation factor P-like protein (Salmonella gallinarum (strain 287/91 / NCTC 13346)).